The primary structure comprises 436 residues: 3-ketoacyl-CoA thiolase (436 aa).

Cys99 (acyl-thioester intermediate) is an active-site residue. Residues His392 and Cys422 each act as proton acceptor in the active site.

This sequence belongs to the thiolase-like superfamily. Thiolase family. Heterotetramer of two alpha chains (FadJ) and two beta chains (FadI).

The protein localises to the cytoplasm. The enzyme catalyses an acyl-CoA + acetyl-CoA = a 3-oxoacyl-CoA + CoA. It participates in lipid metabolism; fatty acid beta-oxidation. Its function is as follows. Catalyzes the final step of fatty acid oxidation in which acetyl-CoA is released and the CoA ester of a fatty acid two carbons shorter is formed. The polypeptide is 3-ketoacyl-CoA thiolase (Salmonella paratyphi A (strain AKU_12601)).